Reading from the N-terminus, the 236-residue chain is Bidirectional sugar transporter SWEET2 (236 aa).

Residues 1 to 15 (MDVFAFNASLSMCKD) are Extracellular-facing. Asparagine 7 is a glycosylation site (N-linked (GlcNAc...) asparagine). The helical transmembrane segment at 16–36 (VAGIAGNIFAFGLFVSPMPTF) threads the bilayer. Positions 18-103 (GIAGNIFAFG…ILFIMHTDKK (86 aa)) constitute a MtN3/slv 1 domain. The Cytoplasmic portion of the chain corresponds to 37-50 (RRIMRNKSTEQFSG). Residues 51–71 (LPYIYALLNCLICLWYGTPFI) form a helical membrane-spanning segment. Residues 72–76 (SHSNA) are Extracellular-facing. Residues 77–97 (MLMTVNSVGATFQLCYIILFI) traverse the membrane as a helical segment. The Cytoplasmic portion of the chain corresponds to 98–108 (MHTDKKNKMKM). Residues 109–129 (LGLLFVVFAVVGVIVAGSLQI) form a helical membrane-spanning segment. Residues 130–137 (PDQLTRWY) lie on the Extracellular side of the membrane. Residues 138–158 (FVGFLSCGSLVSMFASPLFVI) form a helical membrane-spanning segment. The MtN3/slv 2 domain occupies 138–221 (FVGFLSCGSL…LALYCYYHRN (84 aa)). Topologically, residues 159-170 (NLVIRTKSVEFM) are cytoplasmic. A helical transmembrane segment spans residues 171-191 (PFYLSLSTFLMSASFLLYGLF). Topologically, residues 192–194 (NSD) are extracellular. Residues 195 to 215 (AFVYTPNGIGTILGIVQLALY) form a helical membrane-spanning segment. At 216–236 (CYYHRNSIEEETKEPLIVSYV) the chain is on the cytoplasmic side.

It belongs to the SWEET sugar transporter family. As to quaternary structure, forms heterooligomers with SWEET17.

It localises to the cell membrane. In terms of biological role, mediates both low-affinity uptake and efflux of sugar across the plasma membrane. This is Bidirectional sugar transporter SWEET2 from Arabidopsis thaliana (Mouse-ear cress).